The sequence spans 265 residues: Non-seed lectin (265 aa).

A signal peptide (or 23) is located at residues 1-21; sequence MALYRTKELVSLVSIMFVLLA. N-linked (GlcNAc...) asparagine glycans are attached at residues Asn59 and Asn127.

The protein belongs to the leguminous lectin family. Monomer. In terms of tissue distribution, most highly expressed in the epidermal layer of developing shoot tips.

The protein is Non-seed lectin of Pisum sativum (Garden pea).